A 92-amino-acid polypeptide reads, in one-letter code: Long neurotoxin 1 (92 aa).

An N-terminal signal peptide occupies residues 1–21 (MKILLLTLVVVTIVCLDLAYT). Disulfide bonds link Cys-24–Cys-41, Cys-34–Cys-62, Cys-47–Cys-51, Cys-66–Cys-77, and Cys-78–Cys-83.

This sequence belongs to the three-finger toxin family. Long-chain subfamily. Type II alpha-neurotoxin sub-subfamily. Expressed by the venom gland.

It is found in the secreted. Its function is as follows. Binds with high affinity to muscular (alpha-1/CHRNA1) and neuronal (alpha-7/CHRNA7) nicotinic acetylcholine receptor (nAChR) and inhibits acetylcholine from binding to the receptor, thereby impairing neuromuscular and neuronal transmission. In Hydrophis hardwickii (Hardwick's spine-bellied seasnake), this protein is Long neurotoxin 1.